A 202-amino-acid polypeptide reads, in one-letter code: GTP cyclohydrolase 1 (202 aa).

Cysteine 93, histidine 96, and cysteine 164 together coordinate Zn(2+).

The protein belongs to the GTP cyclohydrolase I family. As to quaternary structure, toroid-shaped homodecamer, composed of two pentamers of five dimers.

The enzyme catalyses GTP + H2O = 7,8-dihydroneopterin 3'-triphosphate + formate + H(+). Its pathway is cofactor biosynthesis; 7,8-dihydroneopterin triphosphate biosynthesis; 7,8-dihydroneopterin triphosphate from GTP: step 1/1. The polypeptide is GTP cyclohydrolase 1 (Pelagibacter ubique (strain HTCC1062)).